The primary structure comprises 443 residues: MQNELAQTIPELINWTKEREFSLSLSSDRLAFLLAISIYNNEQTDGELLESDLIDLFRYVSEVFDQSEATLTQRANNAINDLVKQRFLNRFSSEFTEGLAIYRITPLGVGVADYYVRQREFSTLRLSIQLSIVADEIQRASSAAEEGGDERFWRNNVFAPLKYSVAEIFDSIDLSQRMMDENQHQIRERIAELLSQNWHEAILSCEQLLDETSGNLRELQDTLNAAGDKLQAQLLRIQSCLIGRDDLDFVDQLIVNLQNKLDRIISWGQQAIDLWIGYDRHVHKFIRTAIDMDKNRVFGQRLRQSIQDYFNAPWLLYTAKAESLLDLRDDETMLNETEAVGELPSELEYESLSDVQEQIISVMQAHLAPFRAEGKPIDLGAVLREQLALYPQSRHFDVARIIVDQAVKLGMASLDSQAVYPEWQAINDNGAEVQANVIDQYNK.

The tract at residues 209–237 (LDETSGNLRELQDTLNAAGDKLQAQLLRI) is leucine-zipper.

Belongs to the MukF family. In terms of assembly, interacts, and probably forms a ternary complex, with MukE and MukB via its C-terminal region. The complex formation is stimulated by calcium or magnesium. It is required for an interaction between MukE and MukB.

It is found in the cytoplasm. The protein resides in the nucleoid. Its function is as follows. Involved in chromosome condensation, segregation and cell cycle progression. May participate in facilitating chromosome segregation by condensation DNA from both sides of a centrally located replisome during cell division. Not required for mini-F plasmid partitioning. Probably acts via its interaction with MukB and MukE. Overexpression results in anucleate cells. It has a calcium binding activity. The chain is Chromosome partition protein MukF from Actinobacillus pleuropneumoniae serotype 7 (strain AP76).